A 37-amino-acid polypeptide reads, in one-letter code: Potassium channel toxin alpha-KTx 4.3 (37 aa).

Intrachain disulfides connect C7/C28, C13/C33, and C17/C35. Residues G26 to C33 form an interaction with Ca(2+)-activated K(+) channels region.

In terms of tissue distribution, expressed by the venom gland.

The protein localises to the secreted. Functionally, blocks reversibly Shaker B potassium-channels. The sequence is that of Potassium channel toxin alpha-KTx 4.3 from Tityus discrepans (Venezuelan scorpion).